The sequence spans 339 residues: Ribosomal RNA small subunit methyltransferase C (339 aa).

The protein belongs to the methyltransferase superfamily. RsmC family. Monomer.

It localises to the cytoplasm. It catalyses the reaction guanosine(1207) in 16S rRNA + S-adenosyl-L-methionine = N(2)-methylguanosine(1207) in 16S rRNA + S-adenosyl-L-homocysteine + H(+). Its function is as follows. Specifically methylates the guanine in position 1207 of 16S rRNA in the 30S particle. The polypeptide is Ribosomal RNA small subunit methyltransferase C (Photobacterium profundum (strain SS9)).